A 239-amino-acid polypeptide reads, in one-letter code: Probable intron-encoded endonuclease I-ZbiI (239 aa).

This sequence belongs to the LAGLIDADG endonuclease family.

It is found in the mitochondrion. In terms of biological role, endonuclease involved in mitochondrial 21S rRNA gene intron homing. The chain is Probable intron-encoded endonuclease I-ZbiI from Zygosaccharomyces bisporus.